The primary structure comprises 191 residues: Ankyrin repeat domain-containing protein 22 (191 aa).

4 ANK repeats span residues 39 to 68, 72 to 100, 101 to 130, and 134 to 163; these read NGDTPLICACRRGHVRIVSFLLRRNANVNL, KERTCLHYAVKKKFTFIDYLLIILLMPVL, LIGYFLMVSKTKQNEALVRMLLDAGVEVNA, and YGCTALHYACEMKNQSLIPLLLEARADPTI.

This chain is Ankyrin repeat domain-containing protein 22 (ANKRD22), found in Homo sapiens (Human).